Here is a 224-residue protein sequence, read N- to C-terminus: Polyadenylate-binding protein 2 (224 aa).

A compositionally biased stretch (acidic residues) spans M1–G36. The interval M1–I40 is disordered. Residues N9–G74 are a coiled coil. An RRM domain is found at R96 to T173.

Interacts with ZC3H3. In terms of tissue distribution, expressed ubiquitously in all transcriptionally active cells.

Its subcellular location is the nucleus. It is found in the cytoplasm. Involved in the 3'-end formation of mRNA precursors (pre-mRNA) by the addition of a poly(A) tail of 200-250 nt to the upstream cleavage product. Stimulates poly(A) polymerase (PAPOLA) conferring processivity on the poly(A) tail elongation reaction and also controls the poly(A) tail length. Increases the affinity of poly(A) polymerase for RNA. Binds to poly(A) and to poly(G) with high affinity. May protect the poly(A) tail from degradation. Plays a role in the positive regulation of alpha-1,3 fucosylation, possibly by cooperating with swm which regulates nuclear export of fucosyltransferase FucTA. Involved in germline stem cell transit amplification, differentiation and mitosis-to-meiosis transition. The chain is Polyadenylate-binding protein 2 from Drosophila melanogaster (Fruit fly).